The primary structure comprises 154 residues: Large ribosomal subunit protein uL13 (154 aa).

The protein belongs to the universal ribosomal protein uL13 family. Part of the 50S ribosomal subunit.

Functionally, this protein is one of the early assembly proteins of the 50S ribosomal subunit, although it is not seen to bind rRNA by itself. It is important during the early stages of 50S assembly. In Mesorhizobium japonicum (strain LMG 29417 / CECT 9101 / MAFF 303099) (Mesorhizobium loti (strain MAFF 303099)), this protein is Large ribosomal subunit protein uL13.